The chain runs to 58 residues: U11-myrmicitoxin-Tb1a (58 aa).

Residues 1–24 (LAMAMGDAVADAQARAMAAAYAIA) constitute a propeptide that is removed on maturation. An intrachain disulfide couples C34 to C57.

This sequence belongs to the formicidae venom precursor-01 superfamily. As to expression, expressed by the venom gland.

It is found in the secreted. The protein localises to the target cell membrane. Functionally, neurotoxin that causes irreversible rapid flaccid paralysis in blowflies and honeybees upon intrathoracic injection. Causes a quick and irreversible cytolytic effect (at 10 uM) indicating it possibly acts as a pore-forming peptide. Shows only weak effect on aphids (A.pisum) at high doses 24 hours post intrathoracic injection. In vitro, is not cytotoxic on the dipteran S2 Drosophila embryonic cell line. The sequence is that of U11-myrmicitoxin-Tb1a from Tetramorium bicarinatum (Tramp ant).